An 883-amino-acid polypeptide reads, in one-letter code: Lysine-specific demethylase JMJ29 (883 aa).

Disordered stretches follow at residues 30–62 and 161–204; these read KPFM…SAVK and RTHS…SRKQ. Over residues 34–43 the composition is skewed to low complexity; it reads SKGSSPSSSS. Polar residues-rich tracts occupy residues 161 to 172 and 184 to 204; these read RTHSLSANSPEN and SPAS…SRKQ. 12 residues coordinate Zn(2+): Cys209, Cys212, Cys223, Cys226, Cys232, Cys235, Cys252, Cys255, Cys338, Cys341, Cys363, and His381. An RING-type; degenerate zinc finger spans residues 209–256; it reads CHQCLKGERITLLICSECEKTMFCLQCIRKWYPNLSEDDVVEKCPLCR. Residues 333 to 392 form a B box-type; atypical zinc finger; that stretch reads DERVYCDHCATSIVDLHRSCPKCSYELCLKCCQEIREGSLSERPEMKFHYVDRGHRYMHG. The JmjC domain occupies 632–863; it reads PRTGILNIAT…ECLRLTEEFR (232 aa). Fe cation is bound by residues His676 and Asp678. The interval 713-743 is disordered; the sequence is NKVDKQSTEDCNEKEEEEEEELNMPEISSNE. Residues 722–735 are compositionally biased toward acidic residues; it reads DCNEKEEEEEEELN. Residues 755–762 carry the Nuclear localization signal motif; that stretch reads FRREDVPK. His831 lines the Fe cation pocket.

The protein belongs to the JARID1 histone demethylase family. The cofactor is Fe(2+). As to expression, expressed in inflorescences, roots, siliques, leaves and stems.

It is found in the nucleus. May function as histone H3 lysine demethylase and be involved in regulation of gene expression. This is Lysine-specific demethylase JMJ29 from Arabidopsis thaliana (Mouse-ear cress).